A 249-amino-acid chain; its full sequence is Geranylgeranylglyceryl phosphate synthase (249 aa).

Positions 20 and 49 each coordinate Mg(2+). Sn-glycerol 1-phosphate contacts are provided by residues 169–175, 200–201, and 222–223; these read YLDAGSG, GG, and GN.

Belongs to the GGGP/HepGP synthase family. Group II subfamily. Homohexamer. Requires Mg(2+) as cofactor.

The catalysed reaction is sn-glycerol 1-phosphate + (2E,6E,10E)-geranylgeranyl diphosphate = sn-3-O-(geranylgeranyl)glycerol 1-phosphate + diphosphate. In terms of biological role, prenyltransferase that catalyzes the transfer of the geranylgeranyl moiety of geranylgeranyl diphosphate (GGPP) to the C3 hydroxyl of sn-glycerol-1-phosphate (G1P). The sequence is that of Geranylgeranylglyceryl phosphate synthase from Spirosoma linguale (strain ATCC 33905 / DSM 74 / LMG 10896 / Claus 1).